The primary structure comprises 431 residues: Nuclear receptor subfamily 1 group I member 2 (431 aa).

2 NR C4-type zinc fingers span residues 38 to 58 and 74 to 99; these read CRVC…CEGC and CPFR…LRKC. Residues 38 to 104 constitute a DNA-binding region (nuclear receptor); that stretch reads CRVCGDKANG…RLRKCLESGM (67 aa). The Bipartite nuclear localization signal signature appears at 63–89; sequence RRAMKRNVRLRCPFRKGTCEITRKTRR. A hinge region spans residues 105–142; it reads KKEMIMSDAAVEQRRALIKRKKREKIEAPPPGGQGLTE. In terms of domain architecture, NR LBD spans 143-430; the sequence is EQQALIQELM…LMQELFSSTD (288 aa). Residues S244 and 282-285 each bind hyperforin; that span reads ILRF.

The protein belongs to the nuclear hormone receptor family. NR1 subfamily. In terms of assembly, heterodimer with RXRA. Interacts with NCOA1. Interacts (via domain NR LBD) with CRY1 and CRY2 in a ligand-dependent manner.

Its subcellular location is the nucleus. In terms of biological role, nuclear receptor that binds and is activated by a variety of endogenous and xenobiotic compounds. Transcription factor that activates the transcription of multiple genes involved in the metabolism and secretion of potentially harmful xenobiotics, endogenous compounds and drugs. Response to specific ligands is species-specific, due to differences in the ligand-binding domain. Activated by naturally occurring steroids, such as pregnenolone and progesterone. Binds to a response element in the promoters of the CYP3A4 and ABCB1/MDR1 genes. The chain is Nuclear receptor subfamily 1 group I member 2 (Nr1i2) from Rattus norvegicus (Rat).